We begin with the raw amino-acid sequence, 85 residues long: U4-theraphotoxin-Hhn1a (85 aa).

A signal peptide spans 1 to 22 (MKVTLIAILTCAAVLVLHTTAA). Residues 23–48 (EELEAEGQLMEVGMPDTELAAVDEER) constitute a propeptide that is removed on maturation. 3 disulfide bridges follow: C52-C66, C56-C77, and C71-C82.

Belongs to the neurotoxin 12 (Hwtx-2) family. 02 (Hwtx-2) subfamily. Monomer. As to expression, expressed by the venom gland.

The protein resides in the secreted. Neurotoxin active on both insects and mammals. This chain is U4-theraphotoxin-Hhn1a, found in Cyriopagopus hainanus (Chinese bird spider).